Consider the following 268-residue polypeptide: Virulence plasmid ParA family protein pGP5-D (268 aa).

An ATP-binding site is contributed by 13-20; it reads FKGGTGKT.

The protein belongs to the ParA family.

In Chlamydia muridarum (strain MoPn / Nigg), this protein is Virulence plasmid ParA family protein pGP5-D.